Here is a 1071-residue protein sequence, read N- to C-terminus: Fused isobutyryl-CoA mutase (1071 aa).

The region spanning 12–149 is the B12-binding domain; it reads PVRFVTSAAL…QTCDVDLTGE (138 aa). Adenosylcob(III)alamin is bound at residue His-25. The GTPase chaperone MeaI stretch occupies residues 153-400; the sequence is VEAVLAGERT…YQHLLELLGA (248 aa). 203 to 208 provides a ligand contact to GTP; sequence GSGKSS. 4 residues coordinate Mg(2+): Ser-207, Val-232, Asp-233, and Asp-246. Arg-249 lines the GTP pocket. Glu-293 and Thr-294 together coordinate Mg(2+). A GTP-binding site is contributed by 340–343; that stretch reads NKFE. The tract at residues 401–558 is linker; sequence RGLPVDEGVL…RSENLPGHFP (158 aa). The substrate site is built by Phe-566, Arg-601, Arg-707, Tyr-751, Ser-800, Arg-835, and Lys-840. Glu-952 and Asn-1070 together coordinate GTP.

It belongs to the IcmF family. In terms of assembly, homodimer. Adenosylcob(III)alamin serves as cofactor. Requires Mg(2+) as cofactor.

It catalyses the reaction 2-methylpropanoyl-CoA = butanoyl-CoA. The enzyme catalyses GTP + H2O = GDP + phosphate + H(+). Functionally, catalyzes the reversible interconversion of isobutyryl-CoA and n-butyryl-CoA, using radical chemistry. Also exhibits GTPase activity, associated with its G-protein domain (MeaI) that functions as a chaperone that assists cofactor delivery and proper holo-enzyme assembly. Does not exhibit methylmalonyl-CoA mutase (MCM) activity. The chain is Fused isobutyryl-CoA mutase from Nocardia farcinica (strain IFM 10152).